Consider the following 442-residue polypeptide: Cyclic adenylate deaminase (442 aa).

It belongs to the metallo-dependent hydrolases superfamily. Adenosine and AMP deaminases family. The cofactor is Zn(2+).

It catalyses the reaction 3',5'-cyclic AMP + H2O + H(+) = 3',5'-cyclic IMP + NH4(+). Deaminates cAMP into cIMP, thereby repressing cAMP dependent metabolism or genes. The sequence is that of Cyclic adenylate deaminase (add) from Leptospira interrogans serogroup Icterohaemorrhagiae serovar copenhageni (strain Fiocruz L1-130).